The following is a 463-amino-acid chain: Histone acetyltransferase mst1 (463 aa).

The region spanning 22–74 (VYKSKVFAFKDGEYRKAEILMIQKRTRGVVYYVHYNDYNKRLDEWITIDNIDL) is the Tudor-knot domain. The segment at 76–145 (KGIEYPPPEK…GSNAGNESLP (70 aa)) is disordered. Residues 87–99 (KKAHGKGKSSKRP) show a composition bias toward basic residues. Low complexity predominate over residues 111-121 (PSKTEPSTPST). Residues 179–451 (ARIRNINKIC…NGDLLADWQP (273 aa)) form the MYST-type HAT domain. The C2HC MYST-type zinc-finger motif lies at 212 to 237 (VYICSFCFCYYGSERQFQRHREKCTL). The ESA1-RPD3 motif motif lies at 262 to 283 (RTWCRNICLLSKLFLDHKMLYY). The residue at position 279 (Lys-279) is an N6-acetyllysine; by autocatalysis. Residues 320–324 (ACILT) and 329–335 (QRHGYGK) each bind acetyl-CoA. Glu-355 acts as the Proton donor/acceptor in catalysis. Ser-359 serves as a coordination point for acetyl-CoA.

The protein belongs to the MYST (SAS/MOZ) family. In terms of assembly, component of the NuA4 histone acetyltransferase complex. Interacts with arp4. In terms of processing, autoacetylation at Lys-279 is required for proper function.

It is found in the nucleus. The protein localises to the chromosome. It carries out the reaction L-lysyl-[histone] + acetyl-CoA = N(6)-acetyl-L-lysyl-[histone] + CoA + H(+). It catalyses the reaction L-lysyl-[protein] + acetyl-CoA = N(6)-acetyl-L-lysyl-[protein] + CoA + H(+). The enzyme catalyses 2-hydroxyisobutanoyl-CoA + L-lysyl-[protein] = N(6)-(2-hydroxyisobutanoyl)-L-lysyl-[protein] + CoA + H(+). The catalysed reaction is (2E)-butenoyl-CoA + L-lysyl-[protein] = N(6)-(2E)-butenoyl-L-lysyl-[protein] + CoA + H(+). Its function is as follows. Catalytic component of the NuA4 histone acetyltransferase (HAT) complex which is involved in epigenetic transcriptional activation of selected genes principally by acetylation of nucleosomal histones H4, H3, H2B, H2A and H2A variant H2A.Z. Acetylates histone H4 to form H4K5ac, H4K8ac, H4K12ac and H4K16ac, histone H3 to form H3K14ac, and histone H2A to form H2AK4ac and H2AK7ac. The NuA4 complex is involved in the DNA damage response and is required for chromosome segregation. The NuA4 complex plays a direct role in repair of DNA double-strand breaks (DSBs) through homologous recombination. Recruitment to promoters depends on H3K4me. Also acetylates non-histone proteins. In addition to protein acetyltransferase, can use different acyl-CoA substrates, such as 2-hydroxyisobutanoyl-CoA (2-hydroxyisobutyryl-CoA) or (2E)-butenoyl-CoA (crotonyl-CoA), and is able to mediate protein 2-hydroxyisobutyrylation and crotonylation, respectively. This chain is Histone acetyltransferase mst1, found in Schizosaccharomyces pombe (strain 972 / ATCC 24843) (Fission yeast).